The sequence spans 128 residues: Large ribosomal subunit protein eL8 (128 aa).

This sequence belongs to the eukaryotic ribosomal protein eL8 family. In terms of assembly, part of the 50S ribosomal subunit. Probably part of the RNase P complex.

The protein resides in the cytoplasm. Its function is as follows. Multifunctional RNA-binding protein that recognizes the K-turn motif in ribosomal RNA, the RNA component of RNase P, box H/ACA, box C/D and box C'/D' sRNAs. This Staphylothermus marinus (strain ATCC 43588 / DSM 3639 / JCM 9404 / F1) protein is Large ribosomal subunit protein eL8.